The primary structure comprises 451 residues: Glutamyl-tRNA reductase (451 aa).

Residues T47 to R50, S132, E137 to Q139, and Q143 contribute to the substrate site. C48 serves as the catalytic Nucleophile. Residue A212–N217 participates in NADP(+) binding.

This sequence belongs to the glutamyl-tRNA reductase family. As to quaternary structure, homodimer.

The enzyme catalyses (S)-4-amino-5-oxopentanoate + tRNA(Glu) + NADP(+) = L-glutamyl-tRNA(Glu) + NADPH + H(+). Its pathway is porphyrin-containing compound metabolism; protoporphyrin-IX biosynthesis; 5-aminolevulinate from L-glutamyl-tRNA(Glu): step 1/2. Catalyzes the NADPH-dependent reduction of glutamyl-tRNA(Glu) to glutamate 1-semialdehyde (GSA). This Psychrobacter sp. (strain PRwf-1) protein is Glutamyl-tRNA reductase.